We begin with the raw amino-acid sequence, 291 residues long: tRNA-uridine aminocarboxypropyltransferase 1 (291 aa).

A disordered region spans residues Lys158–Glu181. The segment covering Phe171–Glu181 has biased composition (basic and acidic residues). The DXTW signature appears at Asp199–Trp202.

Belongs to the TDD superfamily. DTWD1 family.

It is found in the nucleus. It catalyses the reaction a uridine in tRNA + S-adenosyl-L-methionine = a 3-[(3S)-3-amino-3-carboxypropyl]uridine in tRNA + S-methyl-5'-thioadenosine + H(+). Functionally, catalyzes the formation of 3-(3-amino-3-carboxypropyl)uridine (acp3U) at position 20 in the D-loop of several cytoplasmic tRNAs (acp3U(20)). The chain is tRNA-uridine aminocarboxypropyltransferase 1 from Xenopus laevis (African clawed frog).